A 272-amino-acid polypeptide reads, in one-letter code: MPELPEVETCKKGLRPLLCQKTITAVDVRAARLREPLDAIALSQLIHCQITEITRRAKYLIININREDIAVLVHLGMSGSLRVLPQTEPIKKHDHIIITLNDGYSLRYHDPRRFGLFTVFHAQKPHRLLQHLGIEPLDDSCTGDVLHQHCQKRKIKINSLIMNQNIIVGIGNIYATEALFLSGIRPDRPAQTLSAAECASLMAQIKTLLTAAIARGGTTLRDFSAPDGHAGYFQQQLHVYGKSGQHCPKCGNILEDLKISNRGTVYCPHCQR.

Pro-2 (schiff-base intermediate with DNA) is an active-site residue. Glu-3 functions as the Proton donor in the catalytic mechanism. Lys-58 (proton donor; for beta-elimination activity) is an active-site residue. 3 residues coordinate DNA: His-93, Arg-112, and Arg-153. The segment at 238-272 adopts an FPG-type zinc-finger fold; sequence HVYGKSGQHCPKCGNILEDLKISNRGTVYCPHCQR. Arg-262 (proton donor; for delta-elimination activity) is an active-site residue.

It belongs to the FPG family. In terms of assembly, monomer. Zn(2+) serves as cofactor.

The enzyme catalyses Hydrolysis of DNA containing ring-opened 7-methylguanine residues, releasing 2,6-diamino-4-hydroxy-5-(N-methyl)formamidopyrimidine.. It catalyses the reaction 2'-deoxyribonucleotide-(2'-deoxyribose 5'-phosphate)-2'-deoxyribonucleotide-DNA = a 3'-end 2'-deoxyribonucleotide-(2,3-dehydro-2,3-deoxyribose 5'-phosphate)-DNA + a 5'-end 5'-phospho-2'-deoxyribonucleoside-DNA + H(+). Its function is as follows. Involved in base excision repair of DNA damaged by oxidation or by mutagenic agents. Acts as a DNA glycosylase that recognizes and removes damaged bases. Has a preference for oxidized purines, such as 7,8-dihydro-8-oxoguanine (8-oxoG). Has AP (apurinic/apyrimidinic) lyase activity and introduces nicks in the DNA strand. Cleaves the DNA backbone by beta-delta elimination to generate a single-strand break at the site of the removed base with both 3'- and 5'-phosphates. The sequence is that of Formamidopyrimidine-DNA glycosylase from Dichelobacter nodosus (strain VCS1703A).